A 290-amino-acid polypeptide reads, in one-letter code: 4-diphosphocytidyl-2-C-methyl-D-erythritol kinase (290 aa).

Residue Lys20 is part of the active site. ATP is bound at residue 104-114; sequence PMGGGLGGGSS. The active site involves Asp146.

Belongs to the GHMP kinase family. IspE subfamily.

It carries out the reaction 4-CDP-2-C-methyl-D-erythritol + ATP = 4-CDP-2-C-methyl-D-erythritol 2-phosphate + ADP + H(+). The protein operates within isoprenoid biosynthesis; isopentenyl diphosphate biosynthesis via DXP pathway; isopentenyl diphosphate from 1-deoxy-D-xylulose 5-phosphate: step 3/6. Functionally, catalyzes the phosphorylation of the position 2 hydroxy group of 4-diphosphocytidyl-2C-methyl-D-erythritol. The polypeptide is 4-diphosphocytidyl-2-C-methyl-D-erythritol kinase (Shewanella frigidimarina (strain NCIMB 400)).